A 746-amino-acid polypeptide reads, in one-letter code: Protein psiN (746 aa).

A signal peptide spans 1 to 23 (MGNINKKLFYFLIQLITILIVLS). The Extracellular portion of the chain corresponds to 24-679 (DDSYNSLLPL…KCQSAAVKAA (656 aa)). N-linked (GlcNAc...) asparagine glycosylation is found at Asn-97 and Asn-124. In terms of domain architecture, PA14 spans 125–276 (VTSDDPRIYS…YDYCGVCEGM (152 aa)). N-linked (GlcNAc...) asparagine glycans are attached at residues Asn-319, Asn-353, Asn-380, Asn-477, Asn-553, Asn-628, and Asn-654. Residues 680-700 (VGVGAGAAAGIAIGGAIALGL) traverse the membrane as a helical segment. The Cytoplasmic portion of the chain corresponds to 701–746 (AAFGGKRGYDAWKSSRDNQIQTSSENPLYNPNPNQGDNPLYAANNS). Positions 714–746 (SSRDNQIQTSSENPLYNPNPNQGDNPLYAANNS) are disordered. Over residues 717–746 (DNQIQTSSENPLYNPNPNQGDNPLYAANNS) the composition is skewed to polar residues.

It belongs to the prespore-cell-inducing factor family.

Its subcellular location is the membrane. This chain is Protein psiN (psiN), found in Dictyostelium discoideum (Social amoeba).